Consider the following 529-residue polypeptide: Cytochrome P450 monooxygenase atmQ (529 aa).

2 consecutive transmembrane segments (helical) span residues 22–42 and 51–71; these read YPFAAPTWVYLVGAILIQQLA and SWVNVPVVGGHGIIGSWIAAF. Cys-467 is a heme binding site.

It belongs to the cytochrome P450 family. The cofactor is heme.

The protein localises to the membrane. It functions in the pathway secondary metabolite biosynthesis. Functionally, cytochrome P450 monooxygenase; part of the ATM2 gene cluster that mediates the biosynthesis of aflatrem, a tremorgenic mycotoxin with acute neurotoxic effects. Synthesis of geranylgeranyl diphosphate (GGPP) by AtmG (a GGPP synthase) precedes condensation of GGPP with indole 3-glycerol phosphate, followed by epoxidation and cyclization by AtmM (a FAD-dependent monooxygenase) and AtmC (a prenyltransferase) to produce paspaline. AtmB is also essential for paspaline production, but its exact role has not been identified yet. AtmP, a cytochrome P450 monooxygenase, subsequently converts paspaline to 13-desoxypaxilline via PC-M6 by removal of the C-30 methyl group and oxidation at C-10. AtmQ, a cytochrome P450 monooxygenase, then catalyzes the oxidation of 13-desoxypaxilline, first at C-7 to produce paspalicine and then at C-13 to form paspalinine. Finally, AtmD prenylates paspalinine to form aflatrem. This chain is Cytochrome P450 monooxygenase atmQ, found in Aspergillus flavus.